We begin with the raw amino-acid sequence, 413 residues long: MKKYKILLVIGDGLGDRQVASLNGRTPLENADKPTIASLLRSSLVGLMDPIGPGIVPGSDTSHLAIFGLDPKKYYKGRGSFEALGAGAILTEGDIAFRGNFATVDSNLVVIDRRAGRKIEEAEDLVKELNDKIQEIDGVKVRFYHGTEHRVSVVLSGDNLSDKVSDTDPHEVGKRILNSEPTDDALSSKRTANIINALTRRIYEVLSNSQLNDKRVREGLPPANIVLLRGASIHTELPKLKDYTGLSGAAVSATALIKGVCKSLGMEVVTPPGATGGIDTDYMAKAEAAAKLLEDHDLVFLHIKATDAASHDGKVSEKVKAIEMIDRSIGRVLDRYGSELVVLFTGDHATPVELREHSGDPVPLMLYVPTNIIPDNVGDFNERQARKGSLKITGLNIIDLLLNFSNRATKYGA.

The protein belongs to the BPG-independent phosphoglycerate mutase family. A-PGAM subfamily.

It carries out the reaction (2R)-2-phosphoglycerate = (2R)-3-phosphoglycerate. It functions in the pathway carbohydrate degradation; glycolysis; pyruvate from D-glyceraldehyde 3-phosphate: step 3/5. Its function is as follows. Catalyzes the interconversion of 2-phosphoglycerate and 3-phosphoglycerate. The protein is 2,3-bisphosphoglycerate-independent phosphoglycerate mutase of Metallosphaera sedula (strain ATCC 51363 / DSM 5348 / JCM 9185 / NBRC 15509 / TH2).